Here is a 536-residue protein sequence, read N- to C-terminus: Membrane protein insertase YidC (536 aa).

A helical transmembrane segment spans residues 14 to 34 (ILIATAISLLFFIPYSYFFAP). The disordered stretch occupies residues 43–69 (STSMERAEQQAAPQTSSSPKEGQVSSV). Residues 53 to 68 (AAPQTSSSPKEGQVSS) show a composition bias toward polar residues. The next 5 membrane-spanning stretches (helical) occupy residues 312–332 (VVEYGFITFFAKPLFLLLDWL), 339–359 (WGWAIVLLTLVVRIILFPLTY), 401–421 (GANPMGGCLPLLLQMPIFFAI), 436–456 (WILWINDLSVMDPYFILPILM), and 484–504 (PLIFTFFFVTFPSGLVLYWFV).

Belongs to the OXA1/ALB3/YidC family. Type 1 subfamily. As to quaternary structure, interacts with the Sec translocase complex via SecD. Specifically interacts with transmembrane segments of nascent integral membrane proteins during membrane integration.

The protein localises to the cell inner membrane. Functionally, required for the insertion and/or proper folding and/or complex formation of integral membrane proteins into the membrane. Involved in integration of membrane proteins that insert both dependently and independently of the Sec translocase complex, as well as at least some lipoproteins. Aids folding of multispanning membrane proteins. The polypeptide is Membrane protein insertase YidC (Wolinella succinogenes (strain ATCC 29543 / DSM 1740 / CCUG 13145 / JCM 31913 / LMG 7466 / NCTC 11488 / FDC 602W) (Vibrio succinogenes)).